Reading from the N-terminus, the 241-residue chain is Lipopolysaccharide export system ATP-binding protein LptB (241 aa).

Residues 4–237 enclose the ABC transporter domain; it reads LTAKNLAKAY…EHVKRVYLGE (234 aa). An ATP-binding site is contributed by 36–43; that stretch reads GPNGAGKT.

The protein belongs to the ABC transporter superfamily. Outer membrane lipopolysaccharide export (TC 1.B.42) family. Component of the lipopolysaccharide transport and assembly complex. The LptBFG transporter is composed of two ATP-binding proteins (LptB) and two transmembrane proteins (LptF and LptG).

It is found in the cytoplasm. The protein resides in the cell inner membrane. In terms of biological role, part of the ABC transporter complex LptBFG involved in the translocation of lipopolysaccharide (LPS) from the inner membrane to the outer membrane. Probably responsible for energy coupling to the transport system. The protein is Lipopolysaccharide export system ATP-binding protein LptB (lptB) of Escherichia coli O157:H7.